Here is a 192-residue protein sequence, read N- to C-terminus: UPF0301 protein Bmul_2524/BMULJ_00714 (192 aa).

Belongs to the UPF0301 (AlgH) family.

This Burkholderia multivorans (strain ATCC 17616 / 249) protein is UPF0301 protein Bmul_2524/BMULJ_00714.